The following is a 332-amino-acid chain: Fructose-1,6-bisphosphatase class 1 (332 aa).

Glu-89, Asp-110, Leu-112, and Asp-113 together coordinate Mg(2+). Substrate-binding positions include 113-116, Asn-206, Tyr-239, 257-259, and Lys-269; these read DGSS and YLY. Mg(2+) is bound at residue Glu-275.

This sequence belongs to the FBPase class 1 family. As to quaternary structure, homotetramer. It depends on Mg(2+) as a cofactor.

The protein resides in the cytoplasm. It catalyses the reaction beta-D-fructose 1,6-bisphosphate + H2O = beta-D-fructose 6-phosphate + phosphate. The protein operates within carbohydrate biosynthesis; gluconeogenesis. In Klebsiella pneumoniae (strain 342), this protein is Fructose-1,6-bisphosphatase class 1.